We begin with the raw amino-acid sequence, 37 residues long: Large ribosomal subunit protein bL36 (37 aa).

This sequence belongs to the bacterial ribosomal protein bL36 family.

The protein is Large ribosomal subunit protein bL36 of Nocardia farcinica (strain IFM 10152).